The primary structure comprises 394 residues: Elongation factor Tu 1 (394 aa).

The region spanning 10–204 is the tr-type G domain; that stretch reads KPHVNVGTIG…YLDSYIPEPE (195 aa). Residues 19–26 form a G1 region; sequence GHVDHGKT. Position 19–26 (19–26) interacts with GTP; it reads GHVDHGKT. Position 26 (threonine 26) interacts with Mg(2+). Positions 60–64 are G2; the sequence is GITIN. A G3 region spans residues 81 to 84; it reads DCPG. GTP is bound by residues 81-85 and 136-139; these read DCPGH and NKCD. The interval 136–139 is G4; it reads NKCD. Positions 174 to 176 are G5; that stretch reads SAL.

The protein belongs to the TRAFAC class translation factor GTPase superfamily. Classic translation factor GTPase family. EF-Tu/EF-1A subfamily. As to quaternary structure, monomer.

It is found in the cytoplasm. The enzyme catalyses GTP + H2O = GDP + phosphate + H(+). In terms of biological role, GTP hydrolase that promotes the GTP-dependent binding of aminoacyl-tRNA to the A-site of ribosomes during protein biosynthesis. This Yersinia enterocolitica serotype O:8 / biotype 1B (strain NCTC 13174 / 8081) protein is Elongation factor Tu 1.